The chain runs to 1021 residues: Transmembrane protein 132A (1021 aa).

The first 32 residues, 1–32, serve as a signal peptide directing secretion; it reads MTERAAAAPRGPYGAWLCLLVALALEVVRVGS. Topologically, residues 33-848 are extracellular; sequence NQNTLDPIYL…VTDLELGMYA (816 aa). The disordered stretch occupies residues 207 to 226; sequence PAGEGPGGCGPGTEEEPKEQ. An N-linked (GlcNAc...) asparagine glycan is attached at Asn276. A binds to HSPA5/GRP78 region spans residues 606-913; sequence IEVRSPLSDS…QLDRCSSSSP (308 aa). A confers cellular localization similar to full-length form region spans residues 666–1021; sequence LPAPKQEVAL…NYMERIRGSS (356 aa). A disordered region spans residues 793–835; the sequence is AGDMGSHVGPGIRGKFERAEEEAGKEENEAKEEEEDEEEMVPA. The segment covering 806–820 has biased composition (basic and acidic residues); it reads GKFERAEEEAGKEEN. The span at 821-832 shows a compositional bias: acidic residues; that stretch reads EAKEEEEDEEEM. A helical membrane pass occupies residues 849–869; it reads LLGIFCLAFLIFLVNGVVFVL. At 870–1021 the chain is on the cytoplasmic side; sequence RYQRKEPPDS…NYMERIRGSS (152 aa). Residues 903-955 form a disordered region; the sequence is RQLDRCSSSSPPKGEGGCPCESGAGGDTSTVAPSASESPAGSTSTLARKEAGG. Over residues 929 to 948 the composition is skewed to polar residues; the sequence is DTSTVAPSASESPAGSTSTL.

Belongs to the TMEM132 family. Interacts with HSPA5/GRP78. As to expression, expressed in the brain in neuronal cells of the hypothalamus, thalamus, cerebral cortex, amygdala, and cerebellum.

Its subcellular location is the golgi apparatus membrane. It is found in the endoplasmic reticulum membrane. In terms of biological role, may play a role in embryonic and postnatal development of the brain. Increased resistance to cell death induced by serum starvation in cultured cells. Regulates cAMP-induced GFAP gene expression via STAT3 phosphorylation. This chain is Transmembrane protein 132A (Tmem132a), found in Rattus norvegicus (Rat).